The primary structure comprises 208 residues: uncharacterized protein (208 aa).

Residues 1 to 16 (MKFLLIACLAVPAILA) form the signal peptide. A glycan (N-linked (GlcNAc...) asparagine) is linked at Asn79.

This is an uncharacterized protein from Caenorhabditis elegans.